The sequence spans 244 residues: 1-(5-phosphoribosyl)-5-[(5-phosphoribosylamino)methylideneamino] imidazole-4-carboxamide isomerase (244 aa).

The active-site Proton acceptor is the Asp-13. The active-site Proton donor is Asp-132.

Belongs to the HisA/HisF family.

It localises to the cytoplasm. It catalyses the reaction 1-(5-phospho-beta-D-ribosyl)-5-[(5-phospho-beta-D-ribosylamino)methylideneamino]imidazole-4-carboxamide = 5-[(5-phospho-1-deoxy-D-ribulos-1-ylimino)methylamino]-1-(5-phospho-beta-D-ribosyl)imidazole-4-carboxamide. It functions in the pathway amino-acid biosynthesis; L-histidine biosynthesis; L-histidine from 5-phospho-alpha-D-ribose 1-diphosphate: step 4/9. This is 1-(5-phosphoribosyl)-5-[(5-phosphoribosylamino)methylideneamino] imidazole-4-carboxamide isomerase from Renibacterium salmoninarum (strain ATCC 33209 / DSM 20767 / JCM 11484 / NBRC 15589 / NCIMB 2235).